The chain runs to 104 residues: Small ribosomal subunit protein bS18c (104 aa).

This sequence belongs to the bacterial ribosomal protein bS18 family. In terms of assembly, part of the 30S ribosomal subunit.

The protein localises to the plastid. It localises to the chloroplast. The protein is Small ribosomal subunit protein bS18c of Lotus japonicus (Lotus corniculatus var. japonicus).